Here is a 173-residue protein sequence, read N- to C-terminus: Co-chaperone protein HscB (173 aa).

The J domain maps to 2 to 74 (DYFTLFGLPV…LKRAEYMLSL (73 aa)).

It belongs to the HscB family. As to quaternary structure, interacts with HscA and stimulates its ATPase activity. Interacts with IscU.

Functionally, co-chaperone involved in the maturation of iron-sulfur cluster-containing proteins. Seems to help targeting proteins to be folded toward HscA. The chain is Co-chaperone protein HscB from Serratia proteamaculans (strain 568).